We begin with the raw amino-acid sequence, 166 residues long: NAD(P)H-quinone oxidoreductase subunit I, chloroplastic (166 aa).

4Fe-4S ferredoxin-type domains are found at residues G55–K84 and L95–E124. The [4Fe-4S] cluster site is built by C64, C67, C70, C74, C104, C107, C110, and C114.

It belongs to the complex I 23 kDa subunit family. As to quaternary structure, NDH is composed of at least 16 different subunits, 5 of which are encoded in the nucleus. The cofactor is [4Fe-4S] cluster.

It localises to the plastid. The protein resides in the chloroplast thylakoid membrane. The enzyme catalyses a plastoquinone + NADH + (n+1) H(+)(in) = a plastoquinol + NAD(+) + n H(+)(out). It carries out the reaction a plastoquinone + NADPH + (n+1) H(+)(in) = a plastoquinol + NADP(+) + n H(+)(out). Its function is as follows. NDH shuttles electrons from NAD(P)H:plastoquinone, via FMN and iron-sulfur (Fe-S) centers, to quinones in the photosynthetic chain and possibly in a chloroplast respiratory chain. The immediate electron acceptor for the enzyme in this species is believed to be plastoquinone. Couples the redox reaction to proton translocation, and thus conserves the redox energy in a proton gradient. In Sigesbeckia blakei, this protein is NAD(P)H-quinone oxidoreductase subunit I, chloroplastic.